A 296-amino-acid chain; its full sequence is UDP-N-acetylenolpyruvoylglucosamine reductase (296 aa).

An FAD-binding PCMH-type domain is found at Leu-18–Gly-189. Arg-166 is an active-site residue. Residue Cys-218 is the Proton donor of the active site. Glu-289 is an active-site residue.

Belongs to the MurB family. FAD serves as cofactor.

The protein localises to the cytoplasm. The catalysed reaction is UDP-N-acetyl-alpha-D-muramate + NADP(+) = UDP-N-acetyl-3-O-(1-carboxyvinyl)-alpha-D-glucosamine + NADPH + H(+). It functions in the pathway cell wall biogenesis; peptidoglycan biosynthesis. Its function is as follows. Cell wall formation. This Nitratidesulfovibrio vulgaris (strain ATCC 29579 / DSM 644 / CCUG 34227 / NCIMB 8303 / VKM B-1760 / Hildenborough) (Desulfovibrio vulgaris) protein is UDP-N-acetylenolpyruvoylglucosamine reductase.